The following is a 469-amino-acid chain: Reticulon-2 (469 aa).

Disordered regions lie at residues 1-180 and 201-238; these read MGQV…EASE and LTPQ…NGEG. A compositionally biased stretch (low complexity) spans 14–25; sequence APSTASSTPDST. Over residues 32 to 43 the composition is skewed to basic and acidic residues; the sequence is SDFRELHTAREF. A Phosphoserine modification is found at Ser-44. Positions 135 to 144 are enriched in basic and acidic residues; it reads RPLEELRLRL. Composition is skewed to polar residues over residues 159–168 and 203–226; these read DSATSSSTPL and PQLS…QDLN. A Reticulon domain is found at 270–469; the sequence is VADLLYWKDT…SVSGSKAKAE (200 aa). The next 2 membrane-spanning stretches (helical) occupy residues 293–313 and 388–408; these read LLCL…LLGL and LLFY…LVIL.

As to quaternary structure, interacts with SPAST. Interacts with BACE1. Interacts (via first transmembrane domain) with ARL6IP5/GTRAP3-18. Interacts (via N-terminus) with SLC1A1/EAAC1; the interaction promotes cell surface expression of SLC1A1. Expressed in brain and spinal cord (at protein level). In the embryonic brain cortex, expressed in neurons but not in astrocytes (at protein level).

The protein resides in the endoplasmic reticulum membrane. Its subcellular location is the sarcoplasmic reticulum membrane. It is found in the cell membrane. It localises to the sarcolemma. The protein localises to the T-tubule. The protein resides in the cytoplasm. Its subcellular location is the myofibril. It is found in the sarcomere. It localises to the z line. The protein localises to the cytoskeleton. In terms of biological role, inhibits amyloid precursor protein processing, probably by blocking BACE1 activity. Enhances trafficking of the glutamate transporter SLC1A1/EAAC1 from the endoplasmic reticulum to the cell surface. Plays a role in the translocation of SLC2A4/GLUT4 from intracellular membranes to the cell membrane which facilitates the uptake of glucose into the cell. The protein is Reticulon-2 of Rattus norvegicus (Rat).